A 405-amino-acid polypeptide reads, in one-letter code: Lariat debranching enzyme (405 aa).

Positions 11, 13, 40, and 85 each coordinate a divalent metal cation. Positions 125–159 (SGIWKEWDFNKQRPDWNDLENNNWKANIRNLYHVR) are lariat recognition loop. 3 residues coordinate a divalent metal cation: His-179, His-231, and His-233. Residues 242 to 277 (HNKRSHEPPNKSTSKTKKNNNEIDLDLSSDEDERSG) are disordered. The segment covering 264 to 274 (IDLDLSSDEDE) has biased composition (acidic residues). Ser-269 is modified (phosphoserine).

It belongs to the lariat debranching enzyme family. Fe(2+) serves as cofactor. Requires Zn(2+) as cofactor. Mn(2+) is required as a cofactor.

It localises to the nucleus. The protein localises to the cytoplasm. With respect to regulation, active in presence of diverse metals including Fe(2+), Zn(2+) and Mn(2+). Binds two metal cations in two adjacent alpha and beta metal-binding pockets. The activity is the highest with Fe(2+) bound to the 2 metal-binding sites. Activity is low with Zn(2+) and Mn(2+). Cleaves the 2'-5' phosphodiester linkage at the branch point of lariat intron pre-mRNAs after splicing and converts them into linear molecules that are subsequently degraded, thereby facilitating ribonucleotide turnover. It also participates in Ty1 retrovirus-like transposition via an RNA lariat intermediate in cDNA synthesis. This is Lariat debranching enzyme (DBR1) from Saccharomyces cerevisiae (strain ATCC 204508 / S288c) (Baker's yeast).